The chain runs to 342 residues: Serpentine receptor class delta-33 (342 aa).

The next 7 membrane-spanning stretches (helical) occupy residues 26-46 (IFVI…LLLL), 62-82 (IFLA…VTSM), 112-132 (YVGI…SMIY), 148-168 (IILC…CSNI), 205-225 (LIIL…VMYW), 261-281 (IIPL…QLGF), and 287-307 (YSYF…VVTI).

It belongs to the nematode receptor-like protein srd family.

It localises to the membrane. The polypeptide is Serpentine receptor class delta-33 (srd-33) (Caenorhabditis elegans).